A 469-amino-acid polypeptide reads, in one-letter code: MAQTLYDKLWNTHVVHTEEDGTTLLYIDRQLLHEVTSPQAFEGLKIAQRPVWRISANLAVSDHNVPTTDRSHGIADPVSKLQVDTLDSNCDAFGITQFKMNDVRQGIVHIIGPEQGATLPGMTIVCGDSHTSTHGAFGALAHGIGTSEVEHVLATQTLLQKKSKNMLVKVEGALPRGCTAKDIVLAIIGKIGTAGGTGYAIEFGGSTIRALTMEGRMTVCNMAIEAGARAGMVAVDDTTIDYLKGRPFVPTGAEWDQAVEYWRQFKSDDGAQFDRVVELNAAEIVPQVTWGTSPEMVTSIDGRVPDPEREKDPVKRDAMERALAYMALEPNTPIESIKVDKIFIGSCTNARIEDIRAAAYVVKKLNRRVASNVRLAMVVPGSGLVKAQAEREGLDKVFTDAGFEWREPGCSMCLAMNADRLEPGERCASTSNRNFEGRQGAGGRTHLVSPAMAAAAAIEGHFVDIRQLG.

[4Fe-4S] cluster contacts are provided by C347, C410, and C413.

It belongs to the aconitase/IPM isomerase family. LeuC type 1 subfamily. Heterodimer of LeuC and LeuD. It depends on [4Fe-4S] cluster as a cofactor.

The catalysed reaction is (2R,3S)-3-isopropylmalate = (2S)-2-isopropylmalate. It participates in amino-acid biosynthesis; L-leucine biosynthesis; L-leucine from 3-methyl-2-oxobutanoate: step 2/4. Functionally, catalyzes the isomerization between 2-isopropylmalate and 3-isopropylmalate, via the formation of 2-isopropylmaleate. The sequence is that of 3-isopropylmalate dehydratase large subunit from Burkholderia orbicola (strain MC0-3).